Consider the following 324-residue polypeptide: Glyoxylate/hydroxypyruvate reductase B (324 aa).

Residues arginine 237 and glutamate 266 contribute to the active site. The active-site Proton donor is the histidine 285.

Belongs to the D-isomer specific 2-hydroxyacid dehydrogenase family. GhrB subfamily. As to quaternary structure, homodimer.

It localises to the cytoplasm. The enzyme catalyses glycolate + NADP(+) = glyoxylate + NADPH + H(+). It catalyses the reaction (R)-glycerate + NAD(+) = 3-hydroxypyruvate + NADH + H(+). The catalysed reaction is (R)-glycerate + NADP(+) = 3-hydroxypyruvate + NADPH + H(+). Its function is as follows. Catalyzes the NADPH-dependent reduction of glyoxylate and hydroxypyruvate into glycolate and glycerate, respectively. The polypeptide is Glyoxylate/hydroxypyruvate reductase B (Salmonella agona (strain SL483)).